The sequence spans 146 residues: Phospholipase A2 147 (146 aa).

A signal peptide spans 1-19; it reads MYPAHLLVLLAVCVSLLGA. Positions 20–27 are excised as a propeptide; that stretch reads ASVPPQPL. Cystine bridges form between Cys-38/Cys-98, Cys-54/Cys-145, Cys-56/Cys-72, Cys-71/Cys-126, Cys-78/Cys-119, Cys-87/Cys-112, and Cys-105/Cys-117. Ca(2+)-binding residues include Tyr-55, Gly-57, and Gly-59. His-75 is an active-site residue. Asp-76 provides a ligand contact to Ca(2+). Asp-120 is a catalytic residue.

Belongs to the phospholipase A2 family. Group I subfamily. D49 sub-subfamily. The cofactor is Ca(2+). Expressed by the venom gland.

It is found in the secreted. The enzyme catalyses a 1,2-diacyl-sn-glycero-3-phosphocholine + H2O = a 1-acyl-sn-glycero-3-phosphocholine + a fatty acid + H(+). Functionally, snake venom phospholipase A2 (PLA2) that inhibits collagen-induced platelet aggregation. PLA2 catalyzes the calcium-dependent hydrolysis of the 2-acyl groups in 3-sn-phosphoglycerides. The protein is Phospholipase A2 147 of Drysdalia coronoides (White-lipped snake).